A 201-amino-acid polypeptide reads, in one-letter code: Small ribosomal subunit protein uS4 (201 aa).

Positions 91 to 154 constitute an S4 RNA-binding domain; sequence TRLDNVVYRA…RKMEWFEEAQ (64 aa).

Belongs to the universal ribosomal protein uS4 family. Part of the 30S ribosomal subunit. Contacts protein S5. The interaction surface between S4 and S5 is involved in control of translational fidelity.

In terms of biological role, one of the primary rRNA binding proteins, it binds directly to 16S rRNA where it nucleates assembly of the body of the 30S subunit. With S5 and S12 plays an important role in translational accuracy. The polypeptide is Small ribosomal subunit protein uS4 (Corynebacterium ammoniagenes (Brevibacterium ammoniagenes)).